Consider the following 140-residue polypeptide: Protein SamA (140 aa).

Residues serine 61 and lysine 98 each act as for autocatalytic cleavage activity in the active site.

The protein belongs to the peptidase S24 family.

In terms of biological role, involved in UV protection and mutation. This Salmonella typhimurium (strain LT2 / SGSC1412 / ATCC 700720) protein is Protein SamA (samA).